The following is a 60-amino-acid chain: Conotoxin Cl1.1 (60 aa).

Residues 1–19 (MRCLPVIVILLLLISSAAA) form the signal peptide. Residues 20–48 (VVEGPLRVNRRLRPRKAPVDMQARDWNWG) constitute a propeptide that is removed on maturation.

It belongs to the conotoxin T superfamily. Contains 2 disulfide bonds. In terms of tissue distribution, expressed by the venom duct.

It is found in the secreted. The sequence is that of Conotoxin Cl1.1 from Californiconus californicus (California cone).